We begin with the raw amino-acid sequence, 342 residues long: GTPase Obg (342 aa).

Residues 1 to 159 (MQFIDRAEIE…RNLRLELKLL (159 aa)) form the Obg domain. In terms of domain architecture, OBG-type G spans 160–328 (AEVGIIGLPN…LLQAIWHRLD (169 aa)). GTP contacts are provided by residues 166 to 173 (GLPNAGKS), 191 to 195 (FTTLV), 213 to 216 (DIPG), 280 to 283 (NKVD), and 309 to 311 (SAV). Residues serine 173 and threonine 193 each contribute to the Mg(2+) site.

Belongs to the TRAFAC class OBG-HflX-like GTPase superfamily. OBG GTPase family. As to quaternary structure, monomer. It depends on Mg(2+) as a cofactor.

The protein localises to the cytoplasm. An essential GTPase which binds GTP, GDP and possibly (p)ppGpp with moderate affinity, with high nucleotide exchange rates and a fairly low GTP hydrolysis rate. Plays a role in control of the cell cycle, stress response, ribosome biogenesis and in those bacteria that undergo differentiation, in morphogenesis control. This chain is GTPase Obg, found in Crocosphaera subtropica (strain ATCC 51142 / BH68) (Cyanothece sp. (strain ATCC 51142)).